A 104-amino-acid polypeptide reads, in one-letter code: Putative pterin-4-alpha-carbinolamine dehydratase (104 aa).

The protein belongs to the pterin-4-alpha-carbinolamine dehydratase family.

It carries out the reaction (4aS,6R)-4a-hydroxy-L-erythro-5,6,7,8-tetrahydrobiopterin = (6R)-L-erythro-6,7-dihydrobiopterin + H2O. The sequence is that of Putative pterin-4-alpha-carbinolamine dehydratase (pcbD) from Rhizobium meliloti (strain 1021) (Ensifer meliloti).